The chain runs to 181 residues: Regulator of G-protein signaling 5 (181 aa).

The RGS domain occupies 64–180 (SLDKLLQNNY…VRSEFYQEFI (117 aa)).

The protein localises to the cytoplasm. It localises to the membrane. In terms of biological role, inhibits signal transduction by increasing the GTPase activity of G protein alpha subunits thereby driving them into their inactive GDP-bound form. Binds to G(i)-alpha and G(o)-alpha, but not to G(s)-alpha. The chain is Regulator of G-protein signaling 5 (RGS5) from Sus scrofa (Pig).